Reading from the N-terminus, the 24-residue chain is Brevinin-1Bd (24 aa).

A disulfide bond links cysteine 18 and cysteine 24.

Expressed by the skin glands.

It localises to the secreted. Functionally, antibacterial activity against Gram-positive bacterium S.aureus and Gram-negative bacterium E.coli. Has activity against C.albicans. This chain is Brevinin-1Bd, found in Lithobates berlandieri (Rio Grande leopard frog).